A 213-amino-acid polypeptide reads, in one-letter code: Motile sperm domain-containing protein 1 (213 aa).

Residues 16–143 (PVFVFPTELI…KEHLTESVFF (128 aa)) form the MSP domain. Helical transmembrane passes span 159–179 (SLLT…PTLG) and 191–211 (LSVN…MAIL). The short motif at 205 to 208 (LITM) is the Nuclear export signal element.

Widely expressed. Shows highest expression in ribs, and slightly lower levels of expression in heart, kidney, muscle, thymus, calvariae and lung. Also detected at low levels in spleen and liver.

The protein localises to the endoplasmic reticulum membrane. It localises to the golgi apparatus membrane. In terms of biological role, plays a role in differentiation and/or proliferation of mesenchymal stem cells. Proposed to be involved in epithelial-to-mesenchymal transition (EMT). However, another study suggests that it is not required for EMT or stem cell self-renewal and acts during later stages of differentiation. The polypeptide is Motile sperm domain-containing protein 1 (Mospd1) (Mus musculus (Mouse)).